A 369-amino-acid polypeptide reads, in one-letter code: 4-hydroxy-3-methylbut-2-en-1-yl diphosphate synthase (flavodoxin) (369 aa).

4 residues coordinate [4Fe-4S] cluster: Cys270, Cys273, Cys305, and Glu312.

Belongs to the IspG family. Requires [4Fe-4S] cluster as cofactor.

It catalyses the reaction (2E)-4-hydroxy-3-methylbut-2-enyl diphosphate + oxidized [flavodoxin] + H2O + 2 H(+) = 2-C-methyl-D-erythritol 2,4-cyclic diphosphate + reduced [flavodoxin]. It participates in isoprenoid biosynthesis; isopentenyl diphosphate biosynthesis via DXP pathway; isopentenyl diphosphate from 1-deoxy-D-xylulose 5-phosphate: step 5/6. Functionally, converts 2C-methyl-D-erythritol 2,4-cyclodiphosphate (ME-2,4cPP) into 1-hydroxy-2-methyl-2-(E)-butenyl 4-diphosphate. The polypeptide is 4-hydroxy-3-methylbut-2-en-1-yl diphosphate synthase (flavodoxin) (Pseudomonas savastanoi pv. phaseolicola (strain 1448A / Race 6) (Pseudomonas syringae pv. phaseolicola (strain 1448A / Race 6))).